The chain runs to 152 residues: Xanthine-guanine phosphoribosyltransferase (152 aa).

Residues 37–38 (RG), Arg69, and 88–96 (DDLVDTGVT) contribute to the 5-phospho-alpha-D-ribose 1-diphosphate site. Arg69 serves as a coordination point for GMP. Position 89 (Asp89) interacts with Mg(2+). Residues Asp92 and Ile135 each contribute to the guanine site. Residues Asp92 and Ile135 each coordinate xanthine. GMP is bound by residues 92 to 96 (DTGVT) and 134 to 135 (WI).

It belongs to the purine/pyrimidine phosphoribosyltransferase family. XGPT subfamily. As to quaternary structure, homotetramer. The cofactor is Mg(2+).

It localises to the cell inner membrane. The catalysed reaction is GMP + diphosphate = guanine + 5-phospho-alpha-D-ribose 1-diphosphate. It carries out the reaction XMP + diphosphate = xanthine + 5-phospho-alpha-D-ribose 1-diphosphate. The enzyme catalyses IMP + diphosphate = hypoxanthine + 5-phospho-alpha-D-ribose 1-diphosphate. It participates in purine metabolism; GMP biosynthesis via salvage pathway; GMP from guanine: step 1/1. It functions in the pathway purine metabolism; XMP biosynthesis via salvage pathway; XMP from xanthine: step 1/1. In terms of biological role, purine salvage pathway enzyme that catalyzes the transfer of the ribosyl-5-phosphate group from 5-phospho-alpha-D-ribose 1-diphosphate (PRPP) to the N9 position of the 6-oxopurines guanine and xanthine to form the corresponding ribonucleotides GMP (guanosine 5'-monophosphate) and XMP (xanthosine 5'-monophosphate), with the release of PPi. To a lesser extent, also acts on hypoxanthine. This chain is Xanthine-guanine phosphoribosyltransferase, found in Sodalis glossinidius (strain morsitans).